The sequence spans 158 residues: Pyruvoyl-dependent arginine decarboxylase (158 aa).

The residue at position 44 (S44) is a Pyruvic acid (Ser).

Belongs to the PdaD family. The cofactor is pyruvate.

It carries out the reaction L-arginine + H(+) = agmatine + CO2. This is Pyruvoyl-dependent arginine decarboxylase from Pyrococcus furiosus (strain ATCC 43587 / DSM 3638 / JCM 8422 / Vc1).